A 328-amino-acid chain; its full sequence is Cell division protein ZipA (328 aa).

Residues methionine 1 to arginine 6 are Periplasmic-facing. The helical transmembrane segment at leucine 7–threonine 27 threads the bilayer. Topologically, residues serine 28 to alanine 328 are cytoplasmic. Residues glycine 61–glutamate 72 are compositionally biased toward basic and acidic residues. Residues glycine 61–lysine 183 form a disordered region. Polar residues-rich tracts occupy residues lysine 95–arginine 104 and alanine 164–glutamate 174.

It belongs to the ZipA family. In terms of assembly, interacts with FtsZ via their C-terminal domains.

The protein resides in the cell inner membrane. Functionally, essential cell division protein that stabilizes the FtsZ protofilaments by cross-linking them and that serves as a cytoplasmic membrane anchor for the Z ring. Also required for the recruitment to the septal ring of downstream cell division proteins. The polypeptide is Cell division protein ZipA (Yersinia pestis bv. Antiqua (strain Antiqua)).